The following is a 385-amino-acid chain: 1-deoxy-D-xylulose 5-phosphate reductoisomerase (385 aa).

NADPH is bound by residues Thr-10, Gly-11, Ser-12, Ile-13, Asn-38, and Asn-124. Lys-125 serves as a coordination point for 1-deoxy-D-xylulose 5-phosphate. Glu-126 lines the NADPH pocket. Asp-150 contributes to the Mn(2+) binding site. 1-deoxy-D-xylulose 5-phosphate is bound by residues Ser-151, Glu-152, Ser-176, and His-199. Glu-152 is a binding site for Mn(2+). Gly-205 provides a ligand contact to NADPH. 1-deoxy-D-xylulose 5-phosphate-binding residues include Ser-212, Asn-217, Lys-218, and Glu-221. Position 221 (Glu-221) interacts with Mn(2+).

The protein belongs to the DXR family. The cofactor is Mg(2+). Mn(2+) serves as cofactor.

The enzyme catalyses 2-C-methyl-D-erythritol 4-phosphate + NADP(+) = 1-deoxy-D-xylulose 5-phosphate + NADPH + H(+). It functions in the pathway isoprenoid biosynthesis; isopentenyl diphosphate biosynthesis via DXP pathway; isopentenyl diphosphate from 1-deoxy-D-xylulose 5-phosphate: step 1/6. Catalyzes the NADPH-dependent rearrangement and reduction of 1-deoxy-D-xylulose-5-phosphate (DXP) to 2-C-methyl-D-erythritol 4-phosphate (MEP). The protein is 1-deoxy-D-xylulose 5-phosphate reductoisomerase of Clostridium acetobutylicum (strain ATCC 824 / DSM 792 / JCM 1419 / IAM 19013 / LMG 5710 / NBRC 13948 / NRRL B-527 / VKM B-1787 / 2291 / W).